We begin with the raw amino-acid sequence, 477 residues long: UDP-N-acetylmuramate--L-alanine ligase (477 aa).

An ATP-binding site is contributed by 122 to 128 (GTHGKTT).

The protein belongs to the MurCDEF family.

The protein resides in the cytoplasm. The enzyme catalyses UDP-N-acetyl-alpha-D-muramate + L-alanine + ATP = UDP-N-acetyl-alpha-D-muramoyl-L-alanine + ADP + phosphate + H(+). The protein operates within cell wall biogenesis; peptidoglycan biosynthesis. Cell wall formation. The polypeptide is UDP-N-acetylmuramate--L-alanine ligase (Xanthomonas oryzae pv. oryzae (strain MAFF 311018)).